Here is a 715-residue protein sequence, read N- to C-terminus: MIYEGKAITVKALESGIVELNFDLKGESVNKFNRLTLNELRQAVDTIKADASIKGVIVSSGKDVFIVGADITEFVDNFKLPDAELVAGNLEANKIFSDFEDLNVPTVAAINGIALGGGLEMCLAADYRVMAASAKIGLPEVKLGIYPGFGGTVRLPRLIGADNAIEWIAAGKENRAEDALKVGAVDAVVAPDKLKDAALALVKRAISGEFDYKAKRQPKLEKLKLNAIEQMMAFETAKGFVAGQAGPNYPAPVEAIKTIQKAANFGRDKALEVEAAGFVKLAKTSAAQSLIGLFLNDQELKKKAKAYDEIAKDVKQAAVLGAGIMGGGIAYQSASKGTPILMKDINEHGIEQGLAEAAKLLVGRVDKGRMTAAKMAEVLNGIRPTLSYGDFGNVDLVVEAVVENPKVKQIVLAEVEGQVKEDTILASNTSTISISLLAKALKRPENFVGMHFFNPVHMMPLVEVIRGEKSSELAVATTVAYAKKMGKNPIVVNDCPGFLVNRVLFPYFGGFAKLVSAGVDFVRIDKIMEKFGWPMGPAYLMDVVGIDTGHHGRDVMAEGFPDRMKDDRRSAVDVLYEAKRLGQKNGKGFYAYETDKKGKQKKVADPSVLEVLKPIVYEQREVTDEDIINWMMIPLCLETVRCLEDGIVETAAEADMGLVYGIGFPPFRGGALRYIDSIGVAEFVALADQYADLGALYHPTAKLREMAKNGQSFFG.

The tract at residues 1–190 is enoyl-CoA hydratase/isomerase; that stretch reads MIYEGKAITV…KVGAVDAVVA (190 aa). Asp297 provides a ligand contact to substrate. Residues 312–715 are 3-hydroxyacyl-CoA dehydrogenase; that stretch reads KDVKQAAVLG…MAKNGQSFFG (404 aa). NAD(+)-binding positions include Met325, Asp344, 401-403, Lys408, and Ser430; that span reads VVE. His451 functions as the For 3-hydroxyacyl-CoA dehydrogenase activity in the catalytic mechanism. Asn454 contributes to the NAD(+) binding site. Substrate-binding residues include Asn501 and Tyr660.

It in the N-terminal section; belongs to the enoyl-CoA hydratase/isomerase family. The protein in the C-terminal section; belongs to the 3-hydroxyacyl-CoA dehydrogenase family. In terms of assembly, heterotetramer of two alpha chains (FadB) and two beta chains (FadA).

The catalysed reaction is a (3S)-3-hydroxyacyl-CoA + NAD(+) = a 3-oxoacyl-CoA + NADH + H(+). It carries out the reaction a (3S)-3-hydroxyacyl-CoA = a (2E)-enoyl-CoA + H2O. It catalyses the reaction a 4-saturated-(3S)-3-hydroxyacyl-CoA = a (3E)-enoyl-CoA + H2O. The enzyme catalyses (3S)-3-hydroxybutanoyl-CoA = (3R)-3-hydroxybutanoyl-CoA. The catalysed reaction is a (3Z)-enoyl-CoA = a 4-saturated (2E)-enoyl-CoA. It carries out the reaction a (3E)-enoyl-CoA = a 4-saturated (2E)-enoyl-CoA. Its pathway is lipid metabolism; fatty acid beta-oxidation. Its function is as follows. Involved in the aerobic and anaerobic degradation of long-chain fatty acids via beta-oxidation cycle. Catalyzes the formation of 3-oxoacyl-CoA from enoyl-CoA via L-3-hydroxyacyl-CoA. It can also use D-3-hydroxyacyl-CoA and cis-3-enoyl-CoA as substrate. The sequence is that of Fatty acid oxidation complex subunit alpha from Pseudomonas fluorescens (strain ATCC BAA-477 / NRRL B-23932 / Pf-5).